The following is a 273-amino-acid chain: Ribosomal RNA small subunit methyltransferase A (273 aa).

Asn18, Leu20, Gly45, Glu66, Asp91, and Asn113 together coordinate S-adenosyl-L-methionine.

The protein belongs to the class I-like SAM-binding methyltransferase superfamily. rRNA adenine N(6)-methyltransferase family. RsmA subfamily.

Its subcellular location is the cytoplasm. It catalyses the reaction adenosine(1518)/adenosine(1519) in 16S rRNA + 4 S-adenosyl-L-methionine = N(6)-dimethyladenosine(1518)/N(6)-dimethyladenosine(1519) in 16S rRNA + 4 S-adenosyl-L-homocysteine + 4 H(+). Functionally, specifically dimethylates two adjacent adenosines (A1518 and A1519) in the loop of a conserved hairpin near the 3'-end of 16S rRNA in the 30S particle. May play a critical role in biogenesis of 30S subunits. The polypeptide is Ribosomal RNA small subunit methyltransferase A (Klebsiella pneumoniae (strain 342)).